The chain runs to 432 residues: Trigger factor (432 aa).

The PPIase FKBP-type domain maps to 161-246; sequence GTRATINFVG…VVKVESRELP (86 aa).

It belongs to the FKBP-type PPIase family. Tig subfamily.

It is found in the cytoplasm. The enzyme catalyses [protein]-peptidylproline (omega=180) = [protein]-peptidylproline (omega=0). Functionally, involved in protein export. Acts as a chaperone by maintaining the newly synthesized protein in an open conformation. Functions as a peptidyl-prolyl cis-trans isomerase. In Aliivibrio fischeri (strain ATCC 700601 / ES114) (Vibrio fischeri), this protein is Trigger factor.